Consider the following 329-residue polypeptide: U5 small nuclear ribonucleoprotein TSSC4 (329 aa).

Disordered stretches follow at residues 1 to 88 and 104 to 156; these read MAEA…MSST and ARRA…PDYV. Low complexity predominate over residues 22-41; sequence DTLPSDTVSLSDSDSDLSLP. Phosphoserine is present on residues S60, S67, S86, S132, S143, and S146. Residues 77–104 form a hom2; mediates interaction with the U5 snRNP complexes and required for spliceosomal tri-snRNP complex assembly region; the sequence is VQPFHLRGMSSTFSQRSRDIFDCLEGAA. The tract at residues 149–316 is interaction with SNRNP200; the sequence is VPPVPDYVAH…SRKRSRDHFR (168 aa). The tract at residues 150–186 is hom3; mediates interaction with the U5 snRNP complexes; it reads PPVPDYVAHPERWTKYSLEDVTEVSEQSNQATALAFL. The hom4; necessary for interaction with the PRPF19 complex and required for spliceosomal tri-snRNP complex assembly stretch occupies residues 201–250; that stretch reads FNQDPSSCGEGRVIFTKPVRGVEARHERKRVLGKVGEPGRGGLGNPATDR. K217 carries the post-translational modification N6-acetyllysine. Residues 221–329 are disordered; sequence GVEARHERKR…SSPEDPGAEV (109 aa). S265 is subject to Phosphoserine. A compositionally biased stretch (basic residues) spans 306–317; the sequence is GSRKRSRDHFRN. S321 bears the Phosphoserine mark.

This sequence belongs to the TSSC4 family. As to quaternary structure, interacts in a RNA-independent manner with distinct U5 snRNP-containing complexes, the mono-U5 snRNP and the post-splicing U5 snRNP-PRPF19 complex. Interacts with SNRNP200; the interaction is direct, excludes recruitment of C9ORF78 and WBP4 to SNRNP200 and negatively regulates its RNA helicase activity. Interacts with PRPF8; the interaction is direct. In terms of tissue distribution, expressed in fetal brain, lung, liver and kidney. Widely expressed in adult tissues.

It is found in the nucleus. Its subcellular location is the cytoplasm. Protein associated with the U5 snRNP, during its maturation and its post-splicing recycling and which is required for spliceosomal tri-snRNP complex assembly in the nucleus. Has a molecular sequestering activity and transiently hinders SNRNP200 binding sites for constitutive splicing factors that intervene later during the assembly of the spliceosome and splicing. Together with its molecular sequestering activity, may also function as a molecular adapter and placeholder, coordinating the assembly of the U5 snRNP and its association with the U4/U6 di-snRNP. This chain is U5 small nuclear ribonucleoprotein TSSC4, found in Homo sapiens (Human).